The sequence spans 219 residues: Uracil-DNA glycosylase (219 aa).

The active-site Proton acceptor is the aspartate 64.

Belongs to the uracil-DNA glycosylase (UDG) superfamily. UNG family.

It is found in the cytoplasm. It catalyses the reaction Hydrolyzes single-stranded DNA or mismatched double-stranded DNA and polynucleotides, releasing free uracil.. In terms of biological role, excises uracil residues from the DNA which can arise as a result of misincorporation of dUMP residues by DNA polymerase or due to deamination of cytosine. The sequence is that of Uracil-DNA glycosylase from Leuconostoc citreum (strain KM20).